A 177-amino-acid polypeptide reads, in one-letter code: Nucleoside triphosphate/diphosphate phosphatase (177 aa).

Arg-23 (proton donor) is an active-site residue. Mg(2+) contacts are provided by Asn-87, Asp-103, Asp-105, Asp-107, Asp-120, and Glu-123.

Belongs to the Ntdp family. Requires Mg(2+) as cofactor.

The enzyme catalyses a ribonucleoside 5'-triphosphate + H2O = a ribonucleoside 5'-diphosphate + phosphate + H(+). It carries out the reaction a ribonucleoside 5'-diphosphate + H2O = a ribonucleoside 5'-phosphate + phosphate + H(+). Functionally, has nucleoside phosphatase activity towards nucleoside triphosphates and nucleoside diphosphates. This Streptococcus gordonii (strain Challis / ATCC 35105 / BCRC 15272 / CH1 / DL1 / V288) protein is Nucleoside triphosphate/diphosphate phosphatase.